Consider the following 399-residue polypeptide: MAKLTVKDVELKGKKVLVRVDFNVPLKDGVITNDNRITAALPTIKYILEQGGRAILFSHLGRVKEEADKEGKSLAPVAADLAAKLGQDVAFIAGATRGAELEAAINALEDGQVLLVENTRFEDVDGKKESKNDEELGKYWASLGDGIFVNDAFGTAHRSHASNVGISANVEKAVAGFLLENEIAYIQEAVETPERPFVAILGGSKVSDKIGVIENLLEKADKVLIGGGMTYTFYKAQGIEIGNSLVEEDKLDVAKTLLEKANGKLILPVDSKEANAFAGYTEVRDTDGEAVSEGFLGLDIGPKSIAKFDEALTGAKTVVWNGPMGVFENPDFQAGTIGVMDAIVKQPGVKSIIGGGDSAAAAINLGRADKFSWISTGGGASMELLEGKVLPGLAALTEK.

Residues 21 to 23 (DFN), Arg36, 59 to 62 (HLGR), Arg120, and Arg158 contribute to the substrate site. ATP contacts are provided by residues Lys209, Gly297, Glu328, and 355 to 358 (GGDS).

It belongs to the phosphoglycerate kinase family. In terms of assembly, monomer.

The protein localises to the cytoplasm. The catalysed reaction is (2R)-3-phosphoglycerate + ATP = (2R)-3-phospho-glyceroyl phosphate + ADP. The protein operates within carbohydrate degradation; glycolysis; pyruvate from D-glyceraldehyde 3-phosphate: step 2/5. The protein is Phosphoglycerate kinase of Streptococcus suis (strain 05ZYH33).